We begin with the raw amino-acid sequence, 560 residues long: Bifunctional NAD(P)H-hydrate repair enzyme (560 aa).

The interval 1 to 241 (MLSRLSERCT…WMTAPERMRV (241 aa)) is NAD(P)H-hydrate epimerase. The YjeF N-terminal domain maps to 29 to 235 (LRDAEPAAAA…SLGLEDWMTA (207 aa)). The interval 77 to 81 (NNGGD) is NADPHX 1; for epimerase activity. Residues Asn78 and Asp145 each coordinate K(+). The NADPHX 1; for epimerase activity stretch occupies residues 149-155 (GTGICGP). Positions 160 and 178 each coordinate (6S)-NADPHX. Ser181 serves as a coordination point for K(+). The region spanning 249-547 (LDDVYEYFGI…HRVPLIVNAS (299 aa)) is the YjeF C-terminal domain. Positions 249–560 (LDDVYEYFGI…PASRQRPSGQ (312 aa)) are ADP-dependent (S)-NAD(P)H-hydrate dehydratase. Gly351 provides a ligand contact to (6S)-NADPHX. The segment at 417–423 (HPGEAAR) is NADPHX 2; for dehydratase activity. Residues 454–458 (KGPGT) and 475–484 (NAGMASGGMG) contribute to the ADP site. Asp485 lines the (6S)-NADPHX pocket.

The protein in the N-terminal section; belongs to the NnrE/AIBP family. This sequence in the C-terminal section; belongs to the NnrD/CARKD family. The cofactor is K(+).

The catalysed reaction is (6S)-NADHX + ADP = AMP + phosphate + NADH + H(+). It carries out the reaction (6S)-NADPHX + ADP = AMP + phosphate + NADPH + H(+). It catalyses the reaction (6R)-NADHX = (6S)-NADHX. The enzyme catalyses (6R)-NADPHX = (6S)-NADPHX. Functionally, bifunctional enzyme that catalyzes the epimerization of the S- and R-forms of NAD(P)HX and the dehydration of the S-form of NAD(P)HX at the expense of ADP, which is converted to AMP. This allows the repair of both epimers of NAD(P)HX, a damaged form of NAD(P)H that is a result of enzymatic or heat-dependent hydration. This is Bifunctional NAD(P)H-hydrate repair enzyme from Leishmania major.